A 1006-amino-acid chain; its full sequence is DNA polymerase (1006 aa).

The protein belongs to the DNA polymerase type-B family. As to quaternary structure, interacts with OPG148. Component of the Uracil-DNA glycosylase(UDG)-OPG148-polymerase complex; OPG148 and OPG116/UDG form a heterodimeric processivity factor that associates with OPG071 to form the processive polymerase holoenzyme.

The enzyme catalyses DNA(n) + a 2'-deoxyribonucleoside 5'-triphosphate = DNA(n+1) + diphosphate. Its function is as follows. Catalyzes DNA synthesis. Acquires processivity by associating with a heterodimeric processivity factor comprised of the viral OPG148 and OPG116 proteins, thereby forming the DNA polymerase holoenzyme. Displays 3'- to 5' exonuclease activity. Might participate in viral DNA recombination. Does not perform OPG116/D4synthesis across an abasic site. This chain is DNA polymerase (OPG071), found in Homo sapiens (Human).